A 537-amino-acid chain; its full sequence is ATP synthase subunit beta (537 aa).

The interval 1-61 (MAKAATSKKE…SSPQKGGKKG (61 aa)) is disordered. Residues 7–18 (SKKEASKVEAKK) are compositionally biased toward basic and acidic residues. A compositionally biased stretch (polar residues) spans 44-55 (NSPSRTGSSSPQ). 209–216 (GGAGVGKT) contacts ATP.

The protein belongs to the ATPase alpha/beta chains family. F-type ATPases have 2 components, CF(1) - the catalytic core - and CF(0) - the membrane proton channel. CF(1) has five subunits: alpha(3), beta(3), gamma(1), delta(1), epsilon(1). CF(0) has three main subunits: a(1), b(2) and c(9-12). The alpha and beta chains form an alternating ring which encloses part of the gamma chain. CF(1) is attached to CF(0) by a central stalk formed by the gamma and epsilon chains, while a peripheral stalk is formed by the delta and b chains.

The protein resides in the cell inner membrane. The catalysed reaction is ATP + H2O + 4 H(+)(in) = ADP + phosphate + 5 H(+)(out). Functionally, produces ATP from ADP in the presence of a proton gradient across the membrane. The catalytic sites are hosted primarily by the beta subunits. The polypeptide is ATP synthase subunit beta (Bartonella bacilliformis (strain ATCC 35685 / KC583 / Herrer 020/F12,63)).